Here is a 141-residue protein sequence, read N- to C-terminus: Ly6/PLAUR domain-containing protein 1 (141 aa).

An N-terminal signal peptide occupies residues 1–20; sequence MWVLGIAATFCGLFWLPGLA. Intrachain disulfides connect C25–C54, C28–C37, C46–C71, C77–C100, C88–C97, and C101–C106. Positions 25–108 constitute a UPAR/Ly6 domain; it reads CYQCEEFQLN…SCCNTPLCNG (84 aa). A glycan (N-linked (GlcNAc...) asparagine) is linked at N45. G115 carries GPI-anchor amidated glycine lipidation. The propeptide at 116–141 is removed in mature form; it reads SSASAIRPELFTTVLFFNLALCLAHC.

As to quaternary structure, interacts with CHRNA4 and nAChRs containing alpha-4:beta-2 (CHRNA4:CHRNB2) and alpha-7 (CHRNA7) subunits.

The protein resides in the cell membrane. Its function is as follows. Believed to act as a modulator of nicotinic acetylcholine receptors (nAChRs) activity. In vitro increases receptor desensitization and decreases affinity for ACh of alpha-4:beta-2-containing nAChRs. May play a role in the intracellular trafficking of alpha-4:beta-2 and alpha-7-containing nAChRs and may inhibit their expression at the cell surface. May be involved in the control of anxiety. This is Ly6/PLAUR domain-containing protein 1 (Lypd1) from Rattus norvegicus (Rat).